The chain runs to 101 residues: Interleukin-8 (101 aa).

An N-terminal signal peptide occupies residues Met-1–Ala-22. Arg-27 carries the citrulline modification. 2 disulfide bridges follow: Cys-34–Cys-61 and Cys-36–Cys-77.

This sequence belongs to the intercrine alpha (chemokine CxC) family. As to quaternary structure, homodimer. Interacts with TNFAIP6 (via Link domain); this interaction interferes with chemokine binding to glycosaminoglycans. Citrullination at Arg-27 prevents proteolysis, and dampens tissue inflammation, it also enhances leukocytosis, possibly through impaired chemokine clearance from the blood circulation.

The protein localises to the secreted. Its function is as follows. Chemotactic factor that mediates inflammatory response by attracting neutrophils, basophils, and T-cells to clear pathogens and protect the host from infection. Also plays an important role in neutrophil activation. Released in response to an inflammatory stimulus, exerts its effect by binding to the G-protein-coupled receptors CXCR1 and CXCR2, primarily found in neutrophils, monocytes and endothelial cells. G-protein heterotrimer (alpha, beta, gamma subunits) constitutively binds to CXCR1/CXCR2 receptor and activation by IL8 leads to beta and gamma subunits release from Galpha (GNAI2 in neutrophils) and activation of several downstream signaling pathways including PI3K and MAPK pathways. This is Interleukin-8 (CXCL8) from Canis lupus familiaris (Dog).